The following is a 401-amino-acid chain: L-rhamnonate dehydratase (401 aa).

2 residues coordinate substrate: histidine 29 and arginine 55. Mg(2+) contacts are provided by aspartate 222, glutamate 248, and glutamate 276. Catalysis depends on histidine 325, which acts as the Proton acceptor. Glutamate 345 provides a ligand contact to substrate.

It belongs to the mandelate racemase/muconate lactonizing enzyme family. RhamD subfamily. Homooctamer; tetramer of dimers. Mg(2+) serves as cofactor.

It carries out the reaction L-rhamnonate = 2-dehydro-3-deoxy-L-rhamnonate + H2O. Functionally, catalyzes the dehydration of L-rhamnonate to 2-keto-3-deoxy-L-rhamnonate (KDR). In Escherichia coli O157:H7, this protein is L-rhamnonate dehydratase.